The following is a 141-amino-acid chain: Nucleoside diphosphate kinase (141 aa).

Residues Lys-11, Phe-59, Arg-87, Thr-93, Arg-104, and Asn-114 each coordinate ATP. Catalysis depends on His-117, which acts as the Pros-phosphohistidine intermediate.

Belongs to the NDK family. In terms of assembly, homotetramer. Requires Mg(2+) as cofactor.

Its subcellular location is the cytoplasm. The enzyme catalyses a 2'-deoxyribonucleoside 5'-diphosphate + ATP = a 2'-deoxyribonucleoside 5'-triphosphate + ADP. The catalysed reaction is a ribonucleoside 5'-diphosphate + ATP = a ribonucleoside 5'-triphosphate + ADP. Its function is as follows. Major role in the synthesis of nucleoside triphosphates other than ATP. The ATP gamma phosphate is transferred to the NDP beta phosphate via a ping-pong mechanism, using a phosphorylated active-site intermediate. This Ralstonia nicotianae (strain ATCC BAA-1114 / GMI1000) (Ralstonia solanacearum) protein is Nucleoside diphosphate kinase.